The chain runs to 506 residues: Glutamate--tRNA ligase (506 aa).

A 'HIGH' region motif is present at residues 23-33; sequence PSPTGTPHVGL. The short motif at 267–271 is the 'KMSKS' region element; sequence KLSKR. ATP is bound at residue lysine 270.

This sequence belongs to the class-I aminoacyl-tRNA synthetase family. Glutamate--tRNA ligase type 1 subfamily. Monomer.

Its subcellular location is the cytoplasm. The enzyme catalyses tRNA(Glu) + L-glutamate + ATP = L-glutamyl-tRNA(Glu) + AMP + diphosphate. In terms of biological role, catalyzes the attachment of glutamate to tRNA(Glu) in a two-step reaction: glutamate is first activated by ATP to form Glu-AMP and then transferred to the acceptor end of tRNA(Glu). The sequence is that of Glutamate--tRNA ligase from Clavibacter sepedonicus (Clavibacter michiganensis subsp. sepedonicus).